A 591-amino-acid polypeptide reads, in one-letter code: Aspartate--tRNA(Asp/Asn) ligase (591 aa).

Glutamate 176 serves as a coordination point for L-aspartate. The interval 200–203 (QLFK) is aspartate. Residue arginine 222 coordinates L-aspartate. ATP contacts are provided by residues 222-224 (RDE) and glutamine 231. L-aspartate is bound at residue histidine 450. Glutamate 484 is an ATP binding site. Arginine 491 contacts L-aspartate. 536 to 539 (GLDR) contributes to the ATP binding site.

This sequence belongs to the class-II aminoacyl-tRNA synthetase family. Type 1 subfamily. Homodimer.

It is found in the cytoplasm. It catalyses the reaction tRNA(Asx) + L-aspartate + ATP = L-aspartyl-tRNA(Asx) + AMP + diphosphate. Aspartyl-tRNA synthetase with relaxed tRNA specificity since it is able to aspartylate not only its cognate tRNA(Asp) but also tRNA(Asn). Reaction proceeds in two steps: L-aspartate is first activated by ATP to form Asp-AMP and then transferred to the acceptor end of tRNA(Asp/Asn). This Bacillus thuringiensis (strain Al Hakam) protein is Aspartate--tRNA(Asp/Asn) ligase.